Consider the following 134-residue polypeptide: uncharacterized protein (134 aa).

Positions 1–16 (MAKAVALLLAAIAASA) are cleaved as a signal peptide.

This is an uncharacterized protein from Oryza sativa subsp. indica (Rice).